The following is a 331-amino-acid chain: tRNA-cytidine(32) 2-sulfurtransferase (331 aa).

A disordered region spans residues 1 to 33; it reads MNAPHMNDTAADAATLDDAAAPAGRPALTRREQ. Low complexity predominate over residues 8-23; sequence DTAADAATLDDAAAPA. Positions 71 to 76 match the PP-loop motif motif; it reads SGGKDS. [4Fe-4S] cluster-binding residues include C146, C149, and C237.

The protein belongs to the TtcA family. Homodimer. Mg(2+) is required as a cofactor. Requires [4Fe-4S] cluster as cofactor.

It localises to the cytoplasm. It carries out the reaction cytidine(32) in tRNA + S-sulfanyl-L-cysteinyl-[cysteine desulfurase] + AH2 + ATP = 2-thiocytidine(32) in tRNA + L-cysteinyl-[cysteine desulfurase] + A + AMP + diphosphate + H(+). It participates in tRNA modification. Its function is as follows. Catalyzes the ATP-dependent 2-thiolation of cytidine in position 32 of tRNA, to form 2-thiocytidine (s(2)C32). The sulfur atoms are provided by the cysteine/cysteine desulfurase (IscS) system. The chain is tRNA-cytidine(32) 2-sulfurtransferase from Burkholderia orbicola (strain MC0-3).